Reading from the N-terminus, the 267-residue chain is Interleukin-15 receptor subunit alpha (267 aa).

The signal sequence occupies residues 1–30; sequence MAPRRARGCRTLGLPALLLLLLLRPPATRG. Residues 31–95 enclose the Sushi domain; the sequence is ITCPPPMSVE…WTTPSLKCIR (65 aa). Topologically, residues 31–205 are extracellular; that stretch reads ITCPPPMSVE…VYPQGHSDTT (175 aa). 2 disulfide bridges follow: C33/C75 and C59/C93. Positions 102 to 178 are disordered; it reads QRPAPPSTVT…ESSHGTPSQT (77 aa). Residues 108–124 are compositionally biased toward polar residues; that stretch reads STVTTAGVTPQPESLSP. Residues 129–145 are compositionally biased toward low complexity; that stretch reads PAASSPSSNNTAATTAA. N137 is a glycosylation site (N-linked (GlcNAc...) asparagine). Over residues 152–165 the composition is skewed to polar residues; that stretch reads LMPSKSPSTGTTEI. The chain crosses the membrane as a helical span at residues 206 to 228; the sequence is VAISTSTVLLCGLSAVSLLACYL. Residues 229-267 lie on the Cytoplasmic side of the membrane; the sequence is KSRQTPPLASVEMEAMEALPVTWGTSSRDEDLENCSHHL.

In terms of assembly, the interleukin-15 receptor IL15R is a heterotrimer of IL15RA, IL2RB and IL2RG. IL15RA also self-associates. Interacts with SYK. In terms of processing, N-glycosylated and O-glycosylated. Post-translationally, a soluble form (sIL-15RA) arises from proteolytic shedding of the membrane-anchored receptor. It also binds IL-15 and thus interferes with IL-15 binding to the membrane receptor. In terms of tissue distribution, expressed in neutrophils (at protein level). Expressed in fetal brain with higher expression in the hippocampus and cerebellum than in cortex and thalamus. Higher levels of soluble sIL-15RA form in comparison with membrane-bound forms is present in all brain structures. Isoforms 1, 3, 4, 5, 6, 7, 8 and 9: Widely expressed.

It localises to the membrane. Its subcellular location is the nucleus membrane. The protein localises to the cell surface. It is found in the endoplasmic reticulum membrane. The protein resides in the golgi apparatus membrane. It localises to the cytoplasmic vesicle membrane. Its subcellular location is the secreted. The protein localises to the extracellular space. Functionally, high-affinity receptor for interleukin-15. Can signal both in cis and trans where IL15R from one subset of cells presents IL15 to neighboring IL2RG-expressing cells. In neutrophils, binds and activates kinase SYK in response to IL15 stimulation. In neutrophils, required for IL15-induced phagocytosis in a SYK-dependent manner. Expression of different isoforms may alter or interfere with signal transduction. Does not bind IL15. The sequence is that of Interleukin-15 receptor subunit alpha (IL15RA) from Homo sapiens (Human).